A 114-amino-acid chain; its full sequence is U17-barytoxin-Tl1a (114 aa).

The first 20 residues, 1–20 (MKTIIVFLSLLVLATKFGDA), serve as a signal peptide directing secretion. Residues 21–74 (NEGVNQEQMKEVIQNEFREDFLNEMAAMSLLQQLEAIESTLLEKEADRNSRQKR) constitute a propeptide that is removed on maturation. Cystine bridges form between Cys75-Cys88, Cys82-Cys93, and Cys87-Cys108.

This sequence belongs to the neurotoxin 14 (magi-1) family. 03 (ICK-30-40) subfamily. As to expression, expressed by the venom gland.

The protein resides in the secreted. Functionally, ion channel inhibitor. The polypeptide is U17-barytoxin-Tl1a (Trittame loki (Brush-footed trapdoor spider)).